A 125-amino-acid polypeptide reads, in one-letter code: Large ribosomal subunit protein bL12 (125 aa).

Belongs to the bacterial ribosomal protein bL12 family. Homodimer. Part of the ribosomal stalk of the 50S ribosomal subunit. Forms a multimeric L10(L12)X complex, where L10 forms an elongated spine to which 2 to 4 L12 dimers bind in a sequential fashion. Binds GTP-bound translation factors.

In terms of biological role, forms part of the ribosomal stalk which helps the ribosome interact with GTP-bound translation factors. Is thus essential for accurate translation. The chain is Large ribosomal subunit protein bL12 from Campylobacter concisus (strain 13826).